The primary structure comprises 676 residues: Urocanate hydratase (676 aa).

The interval 15 to 35 is disordered; that stretch reads PLPENRGRQAGVPHAPVRTPS. NAD(+) is bound by residues 126–127, Gln204, 251–253, Glu271, 317–318, 343–347, 354–355, Tyr403, and Gly594; these read GG, GMS, NV, QTSCH, and YY.

This sequence belongs to the urocanase family. NAD(+) serves as cofactor.

The catalysed reaction is 4-imidazolone-5-propanoate = trans-urocanate + H2O. It participates in amino-acid degradation; L-histidine degradation into L-glutamate; N-formimidoyl-L-glutamate from L-histidine: step 2/3. The chain is Urocanate hydratase (UROC1) from Homo sapiens (Human).